Here is a 128-residue protein sequence, read N- to C-terminus: Histone H2A (128 aa).

This sequence belongs to the histone H2A family. In terms of assembly, the nucleosome is a histone octamer containing two molecules each of H2A, H2B, H3 and H4 assembled in one H3-H4 heterotetramer and two H2A-H2B heterodimers. The octamer wraps approximately 147 bp of DNA.

The protein localises to the nucleus. It localises to the chromosome. Functionally, core component of nucleosome. Nucleosomes wrap and compact DNA into chromatin, limiting DNA accessibility to the cellular machineries which require DNA as a template. Histones thereby play a central role in transcription regulation, DNA repair, DNA replication and chromosomal stability. DNA accessibility is regulated via a complex set of post-translational modifications of histones, also called histone code, and nucleosome remodeling. The polypeptide is Histone H2A (HTA1) (Encephalitozoon cuniculi (strain GB-M1) (Microsporidian parasite)).